Reading from the N-terminus, the 342-residue chain is CD2 antigen cytoplasmic tail-binding protein 2 (342 aa).

The tract at residues 1-64 is disordered; the sequence is MPKRKVTFQG…DEEGSSKYDI (64 aa). A Glycyl lysine isopeptide (Lys-Gly) (interchain with G-Cter in SUMO2) cross-link involves residue Lys-26. Lys-44 carries the post-translational modification N6-acetyllysine. Ser-46, Ser-49, and Ser-117 each carry phosphoserine. Disordered regions lie at residues 130–150 and 177–200; these read RPPD…GQTP and LGAR…PQRL. Ser-196 is modified (phosphoserine). The GYF domain maps to 281-339; it reads DVMWEYKWENTGDAELYGPFTSAQMQTWVSEGYFPDGVYCRKLDPPGGQFYNSKRIDFE.

As to quaternary structure, component of the U5 snRNP complex composed of the U5 snRNA and at least PRPF6, PRPF8, SNRNP200, EFTUD2, SNRNP40, DDX23, TXNL4A and CD2BP2. Interacts directly with TXNL4A and PRPF6. Interacts (via GYF domain) with CD2 (via Pro-rich sequence in the cytoplasmic domain). Interacts with PQBP1.

It is found in the cytoplasm. The protein localises to the nucleus. In terms of biological role, involved in pre-mRNA splicing as component of the U5 snRNP complex that is involved in spliceosome assembly. This chain is CD2 antigen cytoplasmic tail-binding protein 2 (Cd2bp2), found in Mus musculus (Mouse).